We begin with the raw amino-acid sequence, 432 residues long: Glutamate--cysteine ligase EgtA (432 aa).

The protein belongs to the glutamate--cysteine ligase type 2 family. EgtA subfamily.

It carries out the reaction L-cysteine + L-glutamate + ATP = gamma-L-glutamyl-L-cysteine + ADP + phosphate + H(+). It functions in the pathway amino-acid biosynthesis; ergothioneine biosynthesis. Its function is as follows. Catalyzes the synthesis of gamma-glutamylcysteine (gamma-GC) which is used as substrate for the biosynthesis of the low-molecular thiol compound ergothioneine (ERG). ERG is one of the major redox buffers which protects bacteria against redox stressors and antibiotics; loss of ERG or mycothiol (MSH, the other major redox buffer in this bacteria) leads to respiratory alterations and bioenergetic deficiencies that negatively impact virulence. The sequence is that of Glutamate--cysteine ligase EgtA (egtA) from Mycobacterium tuberculosis (strain CDC 1551 / Oshkosh).